The chain runs to 173 residues: Photosystem I assembly protein Ycf3 (173 aa).

TPR repeat units lie at residues A35–P68, S72–Q105, and G120–G153.

It belongs to the Ycf3 family.

Its subcellular location is the cellular thylakoid membrane. Functionally, essential for the assembly of the photosystem I (PSI) complex. May act as a chaperone-like factor to guide the assembly of the PSI subunits. The chain is Photosystem I assembly protein Ycf3 from Prochlorococcus marinus (strain MIT 9303).